Reading from the N-terminus, the 18141-residue chain is Titin (18141 aa).

Residues 1-31 (MQRQNPNPYQQQNQQHQQVQQFSSQEYSHSS) show a composition bias toward low complexity. The tract at residues 1–69 (MQRQNPNPYQ…QHHGGSIGGA (69 aa)) is disordered. Over residues 32 to 47 (QEQHQEQRISRTEQHV) the composition is skewed to basic and acidic residues. Residues 48 to 62 (QRSQVTTQRQVQQHH) are compositionally biased toward low complexity. Ig-like domains are found at residues 86–177 (PPVF…VYIQ), 255–343 (PQIS…AVLA), 372–461 (PAFV…AQLN), 471–559 (PQFV…ARLY), 618–708 (PQFI…AILS), 751–842 (PQFI…SSIR), 890–981 (PQFK…AQLT), 1024–1115 (PRFL…ATMI), 1158–1249 (PVFV…ACVR), 1291–1381 (PQFT…CSVR), 1424–1515 (PRFL…VELQ), 1558–1643 (PVFT…EAIT), 1691–1781 (PVFT…ASLI), 1824–1917 (PVFV…LNVT), 1958–2050 (PQFG…VNVT), 2089–2180 (PIFL…CNVR), and 2222–2313 (PHFT…TNLR). Positions 236–266 (EQDSQLSQELDRNQGPAQAPQISQKPRSSKL) are disordered. A disulfide bridge links Cys393 with Cys445. Disulfide bonds link Cys1312-Cys1365, Cys1446-Cys1499, and Cys1579-Cys1632. The cysteines at positions 1846 and 1899 are disulfide-linked. An intrachain disulfide couples Cys2111 to Cys2164. Over residues 2338-2347 (STAPHQRQEP) the composition is skewed to basic and acidic residues. The segment at 2338 to 2357 (STAPHQRQEPETPGTRQRPV) is disordered. Ig-like domains are found at residues 2356 to 2449 (PVFT…MRVV), 2488 to 2581 (PIFT…MKVK), and 2622 to 2715 (PVFT…LKIE). Residues 2731–2750 (PRIGELEAPKEGRPEAPEPT) form a disordered region. Over residues 2734–2746 (GELEAPKEGRPEA) the composition is skewed to basic and acidic residues. Ig-like domains follow at residues 2754–2844 (PVFI…GTLK), 2891–2983 (PPVW…TTIF), 3029–3116 (PRFT…AEIS), 3130–3221 (PRFT…TTLN), 3263–3354 (PKFI…ASLK), 3401–3494 (PVFT…MKIQ), 3539–3625 (PEFI…ATVS), 3676–3767 (PKFT…AKVT), and 3811–3901 (PKFT…ATVS). An intrachain disulfide couples Cys2775 to Cys2828. Cys3152 and Cys3205 form a disulfide bridge. Cystine bridges form between Cys3560/Cys3613, Cys3698/Cys3751, and Cys3832/Cys3885. The stretch at 3910 to 3944 (LQNQVPRGMKRSDALTQMEATIKKYTSEVHLTEDD) is one TPR 1 repeat. Ig-like domains are found at residues 3954–4047 (PRFV…IKVS) and 4092–4181 (PVFV…LKVV). Cys3976 and Cys4029 are disulfide-bonded. The stretch at 4204-4229 (AAYQKERQENELEKVFDERKQVLSEQ) forms a coiled coil. Disordered regions lie at residues 4226–4254 (LSEQSSHTLKGVEHLKPKQYKPPTPDWQQ) and 4299–4336 (SSQAKGMAQSYEENLQEKTSTTEVQAAPPKGIAQPSES). A compositionally biased stretch (polar residues) spans 4309–4322 (YEENLQEKTSTTEV). 4 consecutive Ig-like domains span residues 4394–4482 (PVFT…ANLV), 4497–4585 (PSFV…GDCI), 4604–4692 (PHIV…AQLK), and 4703–4791 (PTIT…AKLT). The stretch at 4403-4438 (CRVFENEQAKFEVEFEGEPNPTVKWYRESFPIQNSP) is one TPR 2 repeat. Cysteines 4625 and 4676 form a disulfide. 8 disordered regions span residues 4803-4891 (RTID…DKGV), 5318-5368 (DELV…QPEP), 5413-5648 (RVIP…EVDA), 5667-5701 (IKKTKRPKSTKEVTEELFEEQPEEEISPEEEVPQK), 5718-5748 (KKTKKPKLTQQVTEEETPHEEIIKESEEVVQ), 5775-5982 (KEEE…QRLL), 6034-6350 (KRVK…MPVD), and 6364-6393 (EEEVVPTEETPEAKQKAHKKRTKRLKEASV). Low complexity predominate over residues 4822-4841 (PESPHAFQPGQQPGQQFGQF). Residues 4852–4863 (GRSRQKKPKVRS) show a composition bias toward basic residues. 5 stretches are compositionally biased toward basic and acidic residues: residues 5344–5357 (QPQEKTFEEAHDEL), 5436–5447 (RPKEAVKAEEIQ), 5541–5552 (QKPDEQKQELPK), 5591–5621 (IEEKLDVAPTKTYEKAVDVLPDEPKVEEKPE), and 5633–5645 (PKSEPTEEVHPDE). A TPR 3 repeat occupies 5575-5613 (PVLWERKKKKPQPQDVIEEKLDVAPTKTYEKAVDVLPDE). Acidic residues predominate over residues 5681–5697 (EELFEEQPEEEISPEEE). Composition is skewed to acidic residues over residues 5779–5792 (IPTEETVEEEETAE) and 5818–5860 (DVEE…QDEI). Positions 5865–5874 (RKVKKAKKPK) are enriched in basic residues. Residues 5883 to 5904 (EIEEDQPEEEVLQEEIIGEQEE) show a composition bias toward acidic residues. Over residues 5910–5920 (RKVKSIKKPKK) the composition is skewed to basic residues. Positions 5921–5971 (VVTEKTVDQTEQPEKPEESQAEEVKETVTEEPKKPKPAPEEAKVEQVEKIS) are enriched in basic and acidic residues. Positions 6034 to 6043 (KRVKKKKPKT) are enriched in basic residues. Acidic residues predominate over residues 6049 to 6079 (ESTEEPAEETEEFEEEATQPEEVQPVEEIPE). Composition is skewed to basic and acidic residues over residues 6081–6092 (PQVKEVADERKT), 6099–6133 (RKEEIIEKVEEVALKRVTRPKKELPQEATIEEVRL), 6141–6169 (IKPEEVKLEEVDLQHVEKKEDEIVQEEKR), 6195–6209 (EAEHIELEKQPKPEE), 6217–6234 (KRGEKKQPVEEVLEEKKW), and 6259–6268 (PIEEQQKPEK). Residues 6281-6290 (PESEEEELEL) show a composition bias toward acidic residues. Positions 6291–6306 (EPLKLPEDKKPKEPKA) are enriched in basic and acidic residues. Over residues 6307–6318 (KKEKKKKPKLKK) the composition is skewed to basic residues. Composition is skewed to acidic residues over residues 6325–6349 (EVSEEVAEPFDEPIAEEDEVEEMPV) and 6364–6373 (EEEVVPTEET). 7 Ig-like domains span residues 6536–6624 (PRIT…TNII), 6633–6728 (PQFT…NILS), 6741–6830 (PTVT…VVVS), 6841–6929 (PRFI…ATVN), 6942–7034 (PRFV…VKIQ), 7066–7151 (PKII…VAVT), and 7189–7279 (PSLL…FDIS). Cys6557 and Cys6608 are oxidised to a cystine. Cys6964 and Cys7016 are disulfide-bonded. Residues 7621-7663 (KIQVQTKQIAQMNTKIKKHKKHKQQEQEVSETTIQCEQKETLA) adopt a coiled-coil conformation. 29 disordered regions span residues 7773–7793 (AKTAESSKELPSKIPKSVKAQ), 9414–9440 (EEDDKQPETTVTVEEVPYEEEKPEEIQ), 9485–9510 (EEDDKQPETTVTVEEVPYEEEKPEEI), 9556–9582 (EEDDKQPETTVTVEEVPYEEEKPEEIQ), 9627–9652 (EEDDKQPETTVTVEEVPYEEEKPEEI), 9698–9724 (EEDDKQPETTVTVEEVPYEEEKPEEIQ), 9769–9796 (EEDDKQPETTVTVEEVPYEEEKPEEIQE), 9838–9865 (TAEEDDKQPETTVTVEEVPYEEEKPEEI), 9911–9937 (EEDDKQPETTVTVEEVPYEEEKPEEIQ), 9982–10008 (EEDDKQPETTVTVEEVPYEEEKPEEIQ), 10053–10080 (EEDDKQPETTVTVEEVPYEEEKPEEIQE), 10125–10149 (ENDKQPETTVTVEEVPYEEEKPEEI), 10195–10220 (EEDDKQPKTTVTVEEVPYEEEKPEEI), 10266–10291 (EEDDKQPETTVTVEEVPYEEEKPEEI), 10337–10364 (EEDDKQPETTVTVEEVPYEEEKPEEIQE), 10408–10433 (EEDDKQPETTVTVEEVPYEEEKPEEI), 10479–10504 (EEDDKQPETTVTVEEVPYEEEKPEEI), 10550–10576 (EEDDKQPETTVTVEEVPYEEEKPEEIQ), 10621–10648 (EEDDKQPETTVTVEEVPYEEEKPEEIQE), 10692–10717 (EEDDKQPETTVTVEEVPYEEEKPEEI), 10763–10788 (EEDDKQPETTVTVEEVPYEEEKPEEI), 10834–10860 (EEDDKQPETTVTVEEVPYEEEKPEEIQ), 10905–10932 (EEDDKQPETTVTVEEVPYEEEKPEEIQE), 11047–11073 (EEDDKQPETTVTVEEVPYEEEKPEEIQ), 11118–11143 (EEDDKQPETTVTVEEVPYEEEKPEEI), 11189–11216 (EEDDKQPETTVTVEEVPYEEEKPEEIQE), 11260–11286 (EEDDKQPETTVTVEEVPYEEEKPEEIQ), 11679–11703 (EELDENKKPKKKTTKTRTFKKRGPD), and 11767–11795 (TEPEEASADALQKPTKDKTPKQKKTLETP). Basic and acidic residues predominate over residues 7774 to 7783 (KTAESSKELP). Composition is skewed to acidic residues over residues 9429–9440 (VPYEEEKPEEIQ), 9500–9510 (VPYEEEKPEEI), 9571–9582 (VPYEEEKPEEIQ), 9642–9652 (VPYEEEKPEEI), 9713–9724 (VPYEEEKPEEIQ), 9784–9796 (VPYEEEKPEEIQE), 9855–9865 (VPYEEEKPEEI), 9926–9937 (VPYEEEKPEEIQ), 9997–10008 (VPYEEEKPEEIQ), 10068–10080 (VPYEEEKPEEIQE), 10139–10149 (VPYEEEKPEEI), 10210–10220 (VPYEEEKPEEI), 10281–10291 (VPYEEEKPEEI), 10352–10364 (VPYEEEKPEEIQE), 10423–10433 (VPYEEEKPEEI), 10494–10504 (VPYEEEKPEEI), 10565–10576 (VPYEEEKPEEIQ), 10636–10648 (VPYEEEKPEEIQE), 10707–10717 (VPYEEEKPEEI), 10778–10788 (VPYEEEKPEEI), 10849–10860 (VPYEEEKPEEIQ), 10920–10932 (VPYEEEKPEEIQE), 11062–11073 (VPYEEEKPEEIQ), 11133–11143 (VPYEEEKPEEI), 11204–11216 (VPYEEEKPEEIQE), and 11275–11286 (VPYEEEKPEEIQ). Residues 11686 to 11699 (KPKKKTTKTRTFKK) are compositionally biased toward basic residues. Residues 11780-11792 (PTKDKTPKQKKTL) are compositionally biased toward basic and acidic residues. Residues 11872-11905 (KTVLQPYQRTEMELPQRARRDSSFKQPVKLTPMK) form a TPR 4 repeat. Disordered stretches follow at residues 12003–12201 (FKHS…ADTK), 12451–12471 (TLQVGVTEHEPTKKLKTKKPE), 12685–12767 (TVDD…LPGP), 12943–12971 (IDHENAEEAPKVLKSKVSEEKPKSKKEKS), 13131–13154 (IKKKKVSPKHGPKEQVFEITETRP), 13325–13349 (QSFESPEPTEGEAHETKTKTKKPKK), 13471–13492 (EEYEPTEMDSKKKPKKKVKSHN), 13554–13576 (EADKPIKQPTQDQPIKKEKPLKK), 13702–13792 (KVQK…KSPD), 13891–13914 (EEVQEKSKEAPEEKKAKTVRKAKK), 13951–13994 (MKRK…DEPK), 14073–14094 (TTVPTETPDQDQPSVKQKRTKK), 14109–14322 (EEEA…QVTT), 14354–14377 (EYEPEPVNQDEKPKEPKKKTRKVK), 14414–14448 (PLDSPIDVLDESPKEVQKKDKKSRSTKVPNEETPV), 14533–14566 (EPEIASPQSIEEHPEQSKEKLAPKPKKTVRKVKK), 14583–14720 (KVDL…SELP), and 14756–14789 (VEESQPIVEEVEDEEPQPATEETVEDVTKPKSKK). Composition is skewed to basic and acidic residues over residues 12022–12035 (ESDHSDKSNKELLH), 12044–12054 (EKIETPDESRK), 12124–12134 (MERTSDIREES), 12183–12201 (LNLRKRQGERPDDDKADTK), 12457–12471 (TEHEPTKKLKTKKPE), and 12685–12709 (TVDDVRVPKDKKKKIDNQKKIKISE). Acidic residues predominate over residues 12731–12741 (HDEDLQTDEYS). Residues 12750-12760 (KSKKKSTKKQK) are compositionally biased toward basic residues. Basic and acidic residues predominate over residues 13141–13154 (GPKEQVFEITETRP). A compositionally biased stretch (basic residues) spans 13482 to 13492 (KKPKKKVKSHN). The TPR 5 repeat unit spans residues 13566-13599 (QPIKKEKPLKKKKDVEYPVSLEAFDHTVKVVSEP). The segment covering 13733–13747 (LVKEDLDQPIERALE) has biased composition (basic and acidic residues). The segment covering 13771–13781 (PKPKKISKPKS) has biased composition (basic residues). Composition is skewed to basic and acidic residues over residues 13893 to 13906 (VQEKSKEAPEEKKA) and 13975 to 13984 (EDKPVEKISE). Residues 14221–14240 (TVEKPLEALHTDSDLEKPDV) show a composition bias toward basic and acidic residues. Over residues 14264 to 14274 (KISSEQPKQPS) the composition is skewed to low complexity. Basic and acidic residues predominate over residues 14282-14294 (VTEHDLKPEEEKP). Residues 14542–14554 (IEEHPEQSKEKLA) show a composition bias toward basic and acidic residues. Positions 14555 to 14564 (PKPKKTVRKV) are enriched in basic residues. Basic and acidic residues predominate over residues 14583-14599 (KVDLEKYEKVEMPEKPV). Low complexity predominate over residues 14652–14662 (ETTVDTTDIPE). The span at 14664-14683 (TPTQTAQPEDTATAQITPSA) shows a compositional bias: polar residues. Residues 14684–14697 (QEEKSTQDDTKDTI) show a composition bias toward basic and acidic residues. Residues 14756-14771 (VEESQPIVEEVEDEEP) show a composition bias toward acidic residues. Residues 14904 to 14936 (IPKTTDIGAIKDNGELSRNIEEAEEILKFKPHK) form a TPR 6 repeat. 8 disordered regions span residues 14956 to 15208 (EKYI…VSVK), 15301 to 15329 (TRKKKPKPQQPEEFEVTLKEPKEEQIQPD), 15425 to 15448 (ISETQSIEEKPIEVAEEAPEETPK), 15578 to 15597 (IRVSESEPKPEEPSVEQFTV), 15697 to 15722 (EKPAEAIVEEEEPVVTEPIEEAPKPE), 15825 to 15876 (EEPK…VEEP), 15951 to 15973 (ESQPEAVEDKEVSLPKKKPKAPI), and 16181 to 16206 (QEEEYEEGEDIEEFVVSQQRKPKPLQ). Composition is skewed to basic and acidic residues over residues 14967–14989 (EKTPYKKPEKAPKPEEKQEDVKL), 15024–15046 (ELKQKPKEVEIVEEQTKKPKDGE), 15069–15080 (QIEHPEIPEKVK), 15088–15097 (KPKDKSKSEP), 15109–15139 (PKEEEAIPEQDVKFRKPERDAPEETDSEIKL), 15169–15179 (IEDKAIDDEKK), 15189–15198 (QPKEQEIAKE), 15316–15325 (VTLKEPKEEQ), 15425–15437 (ISETQSIEEKPIE), and 15578–15589 (IRVSESEPKPEE). The span at 15703–15716 (IVEEEEPVVTEPIE) shows a compositional bias: acidic residues. Positions 15951–15964 (ESQPEAVEDKEVSL) are enriched in basic and acidic residues. Positions 16183 to 16193 (EEYEEGEDIEE) are enriched in acidic residues. Positions 16409–16470 (ENLNIMYSIC…PAQYLMEPEE (62 aa)) constitute an SH3 domain. 9 consecutive Ig-like domains span residues 16501–16590 (PRFI…TELI), 16625–16719 (PTFS…ITLK), 16728–16811 (PQIL…ANLT), 16822–16916 (PPLF…VEVD), 16919–17001 (TFTK…STVE), 17007–17091 (PDFI…CELV), 17097–17180 (PEIV…AKLT), 17184–17270 (PLVD…TKLC), and 17277–17363 (PPVI…AEAS). An intrachain disulfide couples Cys16940 to Cys16989. The Fibronectin type-III 1 domain maps to 17374 to 17467 (APGTPQPLEI…LSPPIRLVPK (94 aa)). Ig-like domains follow at residues 17473-17558 (PSVQ…CRLK) and 17563-17653 (PVLE…CTVQ). Cys17494 and Cys17542 form a disulfide bridge. Fibronectin type-III domains follow at residues 17660-17755 (RPQS…TKKF), 17760-17861 (PPRG…TPPS), 17862-17958 (PPQN…THAS), and 17982-18078 (PPTG…AMTA). A TPR 7 repeat occupies 17694-17728 (LEKCDVQNNVWMKVSDFNKDIKSYAVQKLSMNAQY). The tract at residues 17741–17771 (SEPTESDPVTITKKFEKPSPPRGPTTVSGMN) is disordered.

Belongs to the protein kinase superfamily. CAMK Ser/Thr protein kinase family. As to quaternary structure, interacts with Msp300; this interaction mediates the recruitment of Msp300 to the Z-disks. In terms of tissue distribution, expressed in the mesoderm at stage 11, several hours before myoblast fusion, and persists in most muscle cells, somatic, visceral and pharyngeal muscles and their precursors, until the third instar. Isoform A: Expressed in the indirect flight muscle (at protein level).

Its subcellular location is the cytoplasm. It is found in the nucleus. The protein resides in the chromosome. It localises to the myofibril. The protein localises to the sarcomere. Its subcellular location is the z line. Its function is as follows. Key component in the assembly and functioning of adult and embryonic striated muscles and muscle tendons. By providing connections at the level of individual microfilaments, it contributes to the fine balance of forces between the two halves of the sarcomere. The size and extensibility of the cross-links are the main determinants of sarcomere extensibility properties of muscle. In non-muscle cells, seems to play a role in chromosome condensation and chromosome segregation during mitosis. Might link the lamina network to chromatin or nuclear actin, or both during interphase. The protein is Titin (sls) of Drosophila melanogaster (Fruit fly).